The sequence spans 49 residues: Peridinin-chlorophyll a-binding protein (49 aa).

As to quaternary structure, monomer. Binds 12 peridinin and 2 chlorophyll a molecules per monomer.

It localises to the plastid. The protein resides in the chloroplast. In terms of biological role, water-soluble antenna for capture of solar energy in the blue-green range. Peridinin is an asymmetric carotenoid. The chain is Peridinin-chlorophyll a-binding protein from Alexandrium cohorticula (Dinoflagellate).